The chain runs to 652 residues: DNA ligase (652 aa).

Residues 29–33 (DAEYD), 78–79 (SL), and Glu107 each bind NAD(+). The N6-AMP-lysine intermediate role is filled by Lys109. Residues Arg130, Glu164, Lys278, and Lys302 each contribute to the NAD(+) site. 4 residues coordinate Zn(2+): Cys395, Cys398, Cys413, and Cys418. Positions 577–652 (ASDAALTGMT…IKDEAWLESL (76 aa)) constitute a BRCT domain.

Belongs to the NAD-dependent DNA ligase family. LigA subfamily. Requires Mg(2+) as cofactor. The cofactor is Mn(2+).

The catalysed reaction is NAD(+) + (deoxyribonucleotide)n-3'-hydroxyl + 5'-phospho-(deoxyribonucleotide)m = (deoxyribonucleotide)n+m + AMP + beta-nicotinamide D-nucleotide.. Functionally, DNA ligase that catalyzes the formation of phosphodiester linkages between 5'-phosphoryl and 3'-hydroxyl groups in double-stranded DNA using NAD as a coenzyme and as the energy source for the reaction. It is essential for DNA replication and repair of damaged DNA. This is DNA ligase from Streptococcus mutans serotype c (strain ATCC 700610 / UA159).